The following is a 105-amino-acid chain: Nucleoid-associated protein RPE_4812 (105 aa).

This sequence belongs to the YbaB/EbfC family. As to quaternary structure, homodimer.

The protein localises to the cytoplasm. The protein resides in the nucleoid. Its function is as follows. Binds to DNA and alters its conformation. May be involved in regulation of gene expression, nucleoid organization and DNA protection. The chain is Nucleoid-associated protein RPE_4812 from Rhodopseudomonas palustris (strain BisA53).